A 407-amino-acid polypeptide reads, in one-letter code: Betaine--homocysteine S-methyltransferase 1 (407 aa).

One can recognise a Hcy-binding domain in the interval 11 to 314 (KGILERLNAG…YHIRAIAEEL (304 aa)). Residues K40, K93, and K98 each carry the N6-succinyllysine modification. C217 serves as a coordination point for Zn(2+). K232 and K241 each carry N6-succinyllysine. Zn(2+)-binding residues include C299 and C300. Residue S330 is modified to Phosphoserine. Residues K340 and K377 each carry the N6-succinyllysine modification.

As to quaternary structure, homotetramer. Requires Zn(2+) as cofactor.

Its subcellular location is the cytoplasm. It localises to the cytosol. The protein localises to the nucleus. The catalysed reaction is L-homocysteine + glycine betaine = N,N-dimethylglycine + L-methionine. The protein operates within amine and polyamine degradation; betaine degradation; sarcosine from betaine: step 1/2. It participates in amino-acid biosynthesis; L-methionine biosynthesis via de novo pathway; L-methionine from L-homocysteine (BhmT route): step 1/1. Involved in the regulation of homocysteine metabolism. Converts betaine and homocysteine to dimethylglycine and methionine, respectively. This reaction is also required for the irreversible oxidation of choline. In Mus musculus (Mouse), this protein is Betaine--homocysteine S-methyltransferase 1 (Bhmt).